The sequence spans 85 residues: uncharacterized protein (85 aa).

This is an uncharacterized protein from Treponema pallidum (strain Nichols).